The sequence spans 264 residues: Sec-independent protein translocase protein TatC (264 aa).

Helical transmembrane passes span 20–40 (VVVI…EPAE), 85–105 (FFAQ…PVAV), 131–151 (AVGL…PYIL), 175–195 (FVLQ…VMFA), 211–231 (IRYA…DGSG), and 232–252 (VTMW…MFFA).

The protein belongs to the TatC family. As to quaternary structure, forms a complex with TatA.

The protein resides in the cell membrane. Part of the twin-arginine translocation (Tat) system that transports large folded proteins containing a characteristic twin-arginine motif in their signal peptide across membranes. This chain is Sec-independent protein translocase protein TatC, found in Cenarchaeum symbiosum (strain A).